Consider the following 169-residue polypeptide: EP300-interacting inhibitor of differentiation 1 (169 aa).

The disordered stretch occupies residues 31 to 50; that stretch reads GRGARGPAPEEGPMEEEAGP. Positions 54-120 are interaction with NR0B2; the sequence is RAQRGLFPEA…AGDALDGGFQ (67 aa). Positions 150–154 match the LXCXE motif motif; it reads LGCDE.

As to quaternary structure, interacts via its LXCXE motif with the entire pocket region of RB1. Interacts with EP300, NR0B2 and TRIM27. In terms of tissue distribution, expressed in all adult tissues examined and during embryogenesis.

The protein localises to the nucleus. It localises to the cytoplasm. Functionally, interacts with RB1 and EP300 and acts as a repressor of MYOD1 transactivation. Inhibits EP300 and CBP histone acetyltransferase activity. May be involved in coupling cell cycle exit to the transcriptional activation of genes required for cellular differentiation. May act as a candidate coinhibitory factor for NR0B2 that can be directly linked to transcription inhibitory mechanisms. The polypeptide is EP300-interacting inhibitor of differentiation 1 (Mus musculus (Mouse)).